The primary structure comprises 925 residues: Calpain-B (925 aa).

The Calpain catalytic domain occupies 259–558; that stretch reads MFEDPDFPAT…FDRVEICNLS (300 aa). Residues Cys-314, His-470, and Asn-498 contribute to the active site. Positions 559 to 728 are domain III; sequence PDSLTEDQQH…TRNNMEENDD (170 aa). The disordered stretch occupies residues 723 to 753; it reads MEENDDEVGFGETDDRIAPSLPPPTPKEEDD. The tract at residues 729-748 is linker; the sequence is EVGFGETDDRIAPSLPPPTP. Positions 749–925 are domain IV; the sequence is KEEDDPQRIA…DDWLERTIYS (177 aa). 2 consecutive EF-hand domains span residues 796-831 and 826-861; these read FSKDAVRSMVAMLDKDRSGRLGFEEFEALLTDIAKW and TDIAKWRAVFKLYDTRRTGSIDGFHLRGALNSAGYH. The Ca(2+) site is built by Asp-809, Asp-811, Ser-813, Arg-815, Glu-820, Asp-839, Thr-843, Ser-845, and His-850.

Belongs to the peptidase C2 family. Post-translationally, undergoes calcium-dependent autolytic cleavage between Asn-74 and Ala-75 and between Gln-224 and Asn-225 to produce two major products, calpain B catalytic subunit 1 and calpain B catalytic subunit 2. This autolysis is necessary for activation of the protein. In terms of tissue distribution, strongly expressed in follicular and border cells of the oocyte. Ubiquitously expressed in early embryos. Localized to the trachea and their orifices, and to the larynx of late embryos. Restricted to the salivary gland in third instar larvae.

Its subcellular location is the cytoplasm. The protein localises to the membrane. Its activity is regulated as follows. Activated by millimolar concentrations of calcium. Its function is as follows. Calcium-regulated non-lysosomal thiol-protease. The chain is Calpain-B from Drosophila melanogaster (Fruit fly).